A 102-amino-acid polypeptide reads, in one-letter code: Small ribosomal subunit protein uS10 (102 aa).

Belongs to the universal ribosomal protein uS10 family. Part of the 30S ribosomal subunit.

Involved in the binding of tRNA to the ribosomes. The protein is Small ribosomal subunit protein uS10 of Methanococcus maripaludis (strain C5 / ATCC BAA-1333).